Reading from the N-terminus, the 249-residue chain is Ribosomal RNA small subunit methyltransferase G (249 aa).

S-adenosyl-L-methionine-binding positions include G88, F93, 111–113 (DAT), 139–140 (AE), and R158.

This sequence belongs to the methyltransferase superfamily. RNA methyltransferase RsmG family.

The protein resides in the cytoplasm. Functionally, specifically methylates the N7 position of a guanine in 16S rRNA. The chain is Ribosomal RNA small subunit methyltransferase G from Thermus thermophilus (strain ATCC BAA-163 / DSM 7039 / HB27).